The chain runs to 60 residues: Large ribosomal subunit protein uL30 (60 aa).

This sequence belongs to the universal ribosomal protein uL30 family. Part of the 50S ribosomal subunit.

The polypeptide is Large ribosomal subunit protein uL30 (Ralstonia pickettii (strain 12J)).